Here is a 165-residue protein sequence, read N- to C-terminus: Chorismate pyruvate-lyase (165 aa).

Residues Met35, Arg77, Leu115, and Glu156 each coordinate substrate.

The protein belongs to the UbiC family. Monomer.

It localises to the cytoplasm. It carries out the reaction chorismate = 4-hydroxybenzoate + pyruvate. The protein operates within cofactor biosynthesis; ubiquinone biosynthesis. Its function is as follows. Removes the pyruvyl group from chorismate, with concomitant aromatization of the ring, to provide 4-hydroxybenzoate (4HB) for the ubiquinone pathway. This is Chorismate pyruvate-lyase from Shigella sonnei (strain Ss046).